The primary structure comprises 429 residues: Enolase (429 aa).

Glutamine 163 contacts (2R)-2-phosphoglycerate. Catalysis depends on glutamate 205, which acts as the Proton donor. The Mg(2+) site is built by aspartate 242, glutamate 285, and aspartate 312. Lysine 337, arginine 366, serine 367, and lysine 388 together coordinate (2R)-2-phosphoglycerate. Lysine 337 acts as the Proton acceptor in catalysis.

It belongs to the enolase family. Requires Mg(2+) as cofactor.

The protein resides in the cytoplasm. Its subcellular location is the secreted. The protein localises to the cell surface. It catalyses the reaction (2R)-2-phosphoglycerate = phosphoenolpyruvate + H2O. It functions in the pathway carbohydrate degradation; glycolysis; pyruvate from D-glyceraldehyde 3-phosphate: step 4/5. Its function is as follows. Catalyzes the reversible conversion of 2-phosphoglycerate (2-PG) into phosphoenolpyruvate (PEP). It is essential for the degradation of carbohydrates via glycolysis. This Methylorubrum extorquens (strain CM4 / NCIMB 13688) (Methylobacterium extorquens) protein is Enolase.